Reading from the N-terminus, the 511-residue chain is Bifunctional purine biosynthesis protein PurH (511 aa).

Residues 1 to 145 (MKKRALVSVS…KNHKFVSVIV (145 aa)) form the MGS-like domain.

This sequence belongs to the PurH family.

The enzyme catalyses (6R)-10-formyltetrahydrofolate + 5-amino-1-(5-phospho-beta-D-ribosyl)imidazole-4-carboxamide = 5-formamido-1-(5-phospho-D-ribosyl)imidazole-4-carboxamide + (6S)-5,6,7,8-tetrahydrofolate. It carries out the reaction IMP + H2O = 5-formamido-1-(5-phospho-D-ribosyl)imidazole-4-carboxamide. It functions in the pathway purine metabolism; IMP biosynthesis via de novo pathway; 5-formamido-1-(5-phospho-D-ribosyl)imidazole-4-carboxamide from 5-amino-1-(5-phospho-D-ribosyl)imidazole-4-carboxamide (10-formyl THF route): step 1/1. Its pathway is purine metabolism; IMP biosynthesis via de novo pathway; IMP from 5-formamido-1-(5-phospho-D-ribosyl)imidazole-4-carboxamide: step 1/1. The sequence is that of Bifunctional purine biosynthesis protein PurH from Bacillus thuringiensis (strain Al Hakam).